We begin with the raw amino-acid sequence, 199 residues long: Small ribosomal subunit protein uS4 (199 aa).

One can recognise an S4 RNA-binding domain in the interval arginine 106–isoleucine 170. Residues proline 177–glutamate 199 are disordered.

The protein belongs to the universal ribosomal protein uS4 family. In terms of assembly, part of the 30S ribosomal subunit. Contacts protein S5. The interaction surface between S4 and S5 is involved in control of translational fidelity.

One of the primary rRNA binding proteins, it binds directly to 16S rRNA where it nucleates assembly of the body of the 30S subunit. Its function is as follows. With S5 and S12 plays an important role in translational accuracy. The polypeptide is Small ribosomal subunit protein uS4 (Thermoplasma acidophilum (strain ATCC 25905 / DSM 1728 / JCM 9062 / NBRC 15155 / AMRC-C165)).